A 417-amino-acid polypeptide reads, in one-letter code: Serine hydroxymethyltransferase (417 aa).

(6S)-5,6,7,8-tetrahydrofolate is bound by residues Leu-121 and 125-127 (GHL). The residue at position 229 (Lys-229) is an N6-(pyridoxal phosphate)lysine. 355–357 (SPF) serves as a coordination point for (6S)-5,6,7,8-tetrahydrofolate.

The protein belongs to the SHMT family. As to quaternary structure, homodimer. The cofactor is pyridoxal 5'-phosphate.

It is found in the cytoplasm. It catalyses the reaction (6R)-5,10-methylene-5,6,7,8-tetrahydrofolate + glycine + H2O = (6S)-5,6,7,8-tetrahydrofolate + L-serine. It participates in one-carbon metabolism; tetrahydrofolate interconversion. The protein operates within amino-acid biosynthesis; glycine biosynthesis; glycine from L-serine: step 1/1. Catalyzes the reversible interconversion of serine and glycine with tetrahydrofolate (THF) serving as the one-carbon carrier. This reaction serves as the major source of one-carbon groups required for the biosynthesis of purines, thymidylate, methionine, and other important biomolecules. Also exhibits THF-independent aldolase activity toward beta-hydroxyamino acids, producing glycine and aldehydes, via a retro-aldol mechanism. The sequence is that of Serine hydroxymethyltransferase from Shewanella baltica (strain OS195).